The primary structure comprises 276 residues: CTD small phosphatase-like protein (276 aa).

Positions 1-25 (MDGPAIITQVTNPKEDEGRLPGAGE) are disordered. The FCP1 homology domain maps to 102–260 (LDYGKKCVVI…LDLIPFFEGL (159 aa)). The active-site 4-aspartylphosphate intermediate is Asp112. Mg(2+) is bound by residues Asp112, Asp114, and Asn223. Asp114 (proton donor) is an active-site residue.

Interacts with REST. Monomer. Requires Mg(2+) as cofactor. In terms of tissue distribution, expression is restricted to non-neuronal tissues.

It localises to the nucleus. The enzyme catalyses O-phospho-L-seryl-[protein] + H2O = L-seryl-[protein] + phosphate. The catalysed reaction is O-phospho-L-threonyl-[protein] + H2O = L-threonyl-[protein] + phosphate. Its function is as follows. Recruited by REST to neuronal genes that contain RE-1 elements, leading to neuronal gene silencing in non-neuronal cells. Preferentially catalyzes the dephosphorylation of 'Ser-5' within the tandem 7 residue repeats in the C-terminal domain (CTD) of the largest RNA polymerase II subunit POLR2A. Negatively regulates RNA polymerase II transcription, possibly by controlling the transition from initiation/capping to processive transcript elongation. In Homo sapiens (Human), this protein is CTD small phosphatase-like protein (CTDSPL).